The sequence spans 346 residues: 4-hydroxy-2-oxovalerate aldolase (346 aa).

The Pyruvate carboxyltransferase domain occupies 8–260 (VTVHDMTLRD…ETGVDVFKIQ (253 aa)). 16 to 17 (RD) contacts substrate. Aspartate 17 serves as a coordination point for Mn(2+). The Proton acceptor role is filled by histidine 20. Substrate contacts are provided by serine 170 and histidine 199. Residues histidine 199 and histidine 201 each contribute to the Mn(2+) site. Residue tyrosine 290 participates in substrate binding.

This sequence belongs to the 4-hydroxy-2-oxovalerate aldolase family.

It carries out the reaction (S)-4-hydroxy-2-oxopentanoate = acetaldehyde + pyruvate. The polypeptide is 4-hydroxy-2-oxovalerate aldolase (Polaromonas naphthalenivorans (strain CJ2)).